The sequence spans 71 residues: UPF0346 protein Sez_1447 (71 aa).

Belongs to the UPF0346 family.

The protein is UPF0346 protein Sez_1447 of Streptococcus equi subsp. zooepidemicus (strain MGCS10565).